The sequence spans 175 residues: Ribosome-binding factor A (175 aa).

Residues 125–175 (TAKHAGEADPYKSDAPEDVDIDEDDFDEEDIDLAGDDDIDEDANKDADSSK) are disordered. Basic and acidic residues predominate over residues 128–139 (HAGEADPYKSDA). Over residues 140-165 (PEDVDIDEDDFDEEDIDLAGDDDIDE) the composition is skewed to acidic residues. Residues 166-175 (DANKDADSSK) show a composition bias toward basic and acidic residues.

This sequence belongs to the RbfA family. Monomer. Binds 30S ribosomal subunits, but not 50S ribosomal subunits or 70S ribosomes.

Its subcellular location is the cytoplasm. In terms of biological role, one of several proteins that assist in the late maturation steps of the functional core of the 30S ribosomal subunit. Associates with free 30S ribosomal subunits (but not with 30S subunits that are part of 70S ribosomes or polysomes). Required for efficient processing of 16S rRNA. May interact with the 5'-terminal helix region of 16S rRNA. The polypeptide is Ribosome-binding factor A (Pseudarthrobacter chlorophenolicus (strain ATCC 700700 / DSM 12829 / CIP 107037 / JCM 12360 / KCTC 9906 / NCIMB 13794 / A6) (Arthrobacter chlorophenolicus)).